The sequence spans 226 residues: 3-dehydroquinate dehydratase (226 aa).

Residues 33 to 35 (ELR) and Arg65 contribute to the 3-dehydroquinate site. His120 acts as the Proton donor/acceptor in catalysis. The Schiff-base intermediate with substrate role is filled by Lys147. Arg186, Ser205, and Gln209 together coordinate 3-dehydroquinate.

Belongs to the type-I 3-dehydroquinase family. In terms of assembly, homodimer.

The enzyme catalyses 3-dehydroquinate = 3-dehydroshikimate + H2O. The protein operates within metabolic intermediate biosynthesis; chorismate biosynthesis; chorismate from D-erythrose 4-phosphate and phosphoenolpyruvate: step 3/7. Involved in the third step of the chorismate pathway, which leads to the biosynthesis of aromatic amino acids. Catalyzes the cis-dehydration of 3-dehydroquinate (DHQ) and introduces the first double bond of the aromatic ring to yield 3-dehydroshikimate. The chain is 3-dehydroquinate dehydratase from Thermodesulfovibrio yellowstonii (strain ATCC 51303 / DSM 11347 / YP87).